We begin with the raw amino-acid sequence, 60 residues long: DNA-directed RNA polymerase subunit Rpo6 (60 aa).

Belongs to the archaeal Rpo6/eukaryotic RPB6 RNA polymerase subunit family. As to quaternary structure, part of the RNA polymerase complex.

It localises to the cytoplasm. The enzyme catalyses RNA(n) + a ribonucleoside 5'-triphosphate = RNA(n+1) + diphosphate. In terms of biological role, DNA-dependent RNA polymerase (RNAP) catalyzes the transcription of DNA into RNA using the four ribonucleoside triphosphates as substrates. The protein is DNA-directed RNA polymerase subunit Rpo6 of Methanothrix thermoacetophila (strain DSM 6194 / JCM 14653 / NBRC 101360 / PT) (Methanosaeta thermophila).